Consider the following 382-residue polypeptide: Succinate--CoA ligase [ADP-forming] subunit beta (382 aa).

The ATP-grasp domain occupies 9–240; the sequence is KELLKKYGLP…ITQIDPLEVE (232 aa). Lys46, Glu98, Thr101, and Glu106 together coordinate ATP. The Mg(2+) site is built by Asn195 and Asp209. Substrate is bound by residues Asn260 and 317-319; that span reads GIL.

Belongs to the succinate/malate CoA ligase beta subunit family. In terms of assembly, heterotetramer of two alpha and two beta subunits. The cofactor is Mg(2+).

The catalysed reaction is succinate + ATP + CoA = succinyl-CoA + ADP + phosphate. The enzyme catalyses GTP + succinate + CoA = succinyl-CoA + GDP + phosphate. It functions in the pathway carbohydrate metabolism; tricarboxylic acid cycle; succinate from succinyl-CoA (ligase route): step 1/1. Functionally, succinyl-CoA synthetase functions in the citric acid cycle (TCA), coupling the hydrolysis of succinyl-CoA to the synthesis of either ATP or GTP and thus represents the only step of substrate-level phosphorylation in the TCA. The beta subunit provides nucleotide specificity of the enzyme and binds the substrate succinate, while the binding sites for coenzyme A and phosphate are found in the alpha subunit. This is Succinate--CoA ligase [ADP-forming] subunit beta from Hydrogenobaculum sp. (strain Y04AAS1).